Consider the following 143-residue polypeptide: Putative pre-16S rRNA nuclease (143 aa).

It belongs to the YqgF nuclease family.

Its subcellular location is the cytoplasm. In terms of biological role, could be a nuclease involved in processing of the 5'-end of pre-16S rRNA. The polypeptide is Putative pre-16S rRNA nuclease (Crocosphaera subtropica (strain ATCC 51142 / BH68) (Cyanothece sp. (strain ATCC 51142))).